A 205-amino-acid chain; its full sequence is Adenylyl-sulfate kinase (205 aa).

31–38 (GLSGAGKS) lines the ATP pocket. The active-site Phosphoserine intermediate is serine 105.

The protein belongs to the APS kinase family.

The enzyme catalyses adenosine 5'-phosphosulfate + ATP = 3'-phosphoadenylyl sulfate + ADP + H(+). It participates in sulfur metabolism; hydrogen sulfide biosynthesis; sulfite from sulfate: step 2/3. In terms of biological role, catalyzes the synthesis of activated sulfate. The chain is Adenylyl-sulfate kinase from Shewanella sp. (strain ANA-3).